A 148-amino-acid chain; its full sequence is uncharacterized protein (148 aa).

The protein resides in the plastid. It localises to the chloroplast. This is an uncharacterized protein from Porphyra purpurea (Red seaweed).